The sequence spans 166 residues: Transcription antitermination protein NusB (166 aa).

The segment covering 1 to 18 (MISDESDRFNPRDPKPAD) has biased composition (basic and acidic residues). The segment at 1 to 30 (MISDESDRFNPRDPKPADAGKPSKSAKRRE) is disordered.

It belongs to the NusB family.

Functionally, involved in transcription antitermination. Required for transcription of ribosomal RNA (rRNA) genes. Binds specifically to the boxA antiterminator sequence of the ribosomal RNA (rrn) operons. The protein is Transcription antitermination protein NusB of Pseudomonas entomophila (strain L48).